Consider the following 375-residue polypeptide: Chaperone protein DnaJ (375 aa).

Residues D5 to G70 enclose the J domain. The CR-type zinc-finger motif lies at G133–N211. The Zn(2+) site is built by C146, C149, C163, C166, C185, C188, C199, and C202. CXXCXGXG motif repeat units lie at residues C146–G153, C163–G170, C185–G192, and C199–G206.

The protein belongs to the DnaJ family. Homodimer. Zn(2+) is required as a cofactor.

The protein localises to the cytoplasm. Participates actively in the response to hyperosmotic and heat shock by preventing the aggregation of stress-denatured proteins and by disaggregating proteins, also in an autonomous, DnaK-independent fashion. Unfolded proteins bind initially to DnaJ; upon interaction with the DnaJ-bound protein, DnaK hydrolyzes its bound ATP, resulting in the formation of a stable complex. GrpE releases ADP from DnaK; ATP binding to DnaK triggers the release of the substrate protein, thus completing the reaction cycle. Several rounds of ATP-dependent interactions between DnaJ, DnaK and GrpE are required for fully efficient folding. Also involved, together with DnaK and GrpE, in the DNA replication of plasmids through activation of initiation proteins. The sequence is that of Chaperone protein DnaJ from Acidithiobacillus ferrooxidans (strain ATCC 23270 / DSM 14882 / CIP 104768 / NCIMB 8455) (Ferrobacillus ferrooxidans (strain ATCC 23270)).